The chain runs to 194 residues: Peptidyl-tRNA hydrolase (194 aa).

Residue tyrosine 16 participates in tRNA binding. Residue histidine 21 is the Proton acceptor of the active site. Residues tyrosine 67, asparagine 69, and asparagine 115 each coordinate tRNA.

Belongs to the PTH family. Monomer.

It localises to the cytoplasm. The enzyme catalyses an N-acyl-L-alpha-aminoacyl-tRNA + H2O = an N-acyl-L-amino acid + a tRNA + H(+). Functionally, hydrolyzes ribosome-free peptidyl-tRNAs (with 1 or more amino acids incorporated), which drop off the ribosome during protein synthesis, or as a result of ribosome stalling. In terms of biological role, catalyzes the release of premature peptidyl moieties from peptidyl-tRNA molecules trapped in stalled 50S ribosomal subunits, and thus maintains levels of free tRNAs and 50S ribosomes. The protein is Peptidyl-tRNA hydrolase of Synechocystis sp. (strain ATCC 27184 / PCC 6803 / Kazusa).